Reading from the N-terminus, the 480-residue chain is ATP synthase subunit beta, chloroplastic (480 aa).

Residue 161 to 168 (GGAGVGKT) coordinates ATP.

Belongs to the ATPase alpha/beta chains family. As to quaternary structure, F-type ATPases have 2 components, CF(1) - the catalytic core - and CF(0) - the membrane proton channel. CF(1) has five subunits: alpha(3), beta(3), gamma(1), delta(1), epsilon(1). CF(0) has four main subunits: a(1), b(1), b'(1) and c(9-12).

The protein resides in the plastid. It localises to the chloroplast thylakoid membrane. The enzyme catalyses ATP + H2O + 4 H(+)(in) = ADP + phosphate + 5 H(+)(out). In terms of biological role, produces ATP from ADP in the presence of a proton gradient across the membrane. The catalytic sites are hosted primarily by the beta subunits. The polypeptide is ATP synthase subunit beta, chloroplastic (Tetradesmus obliquus (Green alga)).